A 572-amino-acid polypeptide reads, in one-letter code: Proteinaceous RNase P 1, chloroplastic/mitochondrial (572 aa).

The transit peptide at 1-70 (MLRLTCFTPS…SRHLCTLPLA (70 aa)) directs the protein to the chloroplast and mitochondrion. PPR repeat units follow at residues 96–130 (PEALLKQKLDMCSKKGDVLEALRLYDEARRNGVQL), 136–174 (NVLLYVCSLAEAATESSPNPGLSRGFDIFKQMIVDKVVP), 175–209 (NEATFTNGARLAVAKDDPEMAFDMVKQMKAFGIQP), and 210–244 (RLRSYGPALFGFCRKGDADKAYEVDAHMVESEVVP). The PRORP domain maps to 338–565 (MDENGVCKCC…DLQTSRQWLC (228 aa)). Cys-344 and Cys-347 together coordinate Zn(2+). Residues Asp-399, Asp-474, Asp-475, and Asp-493 each coordinate Mn(2+). Zn(2+)-binding residues include His-548 and Cys-565.

This sequence belongs to the PPR family. P subfamily. Mg(2+) is required as a cofactor. Mn(2+) serves as cofactor.

The protein localises to the mitochondrion. It is found in the plastid. The protein resides in the chloroplast. It catalyses the reaction Endonucleolytic cleavage of RNA, removing 5'-extranucleotides from tRNA precursor.. Endonuclease RNase P responsible for the 5' maturation of tRNA precursors. Preferentially cleaves at the unusual cleavage site, but also able to cleave at the classical cleavage site. Also involved in the maturation of mRNAs in mitochondria. This chain is Proteinaceous RNase P 1, chloroplastic/mitochondrial (PRORP1), found in Arabidopsis thaliana (Mouse-ear cress).